A 670-amino-acid polypeptide reads, in one-letter code: DNA topoisomerase 6 subunit B (670 aa).

Residues 1-30 form a disordered region; it reads MAGDDLVETKKGSSKNSKDSNESKLKQKSP. Residues 7 to 25 show a composition bias toward basic and acidic residues; that stretch reads VETKKGSSKNSKDSNESKL. Residues Asn60, Asp160, 181–182, 190–197, and Lys516 contribute to the ATP site; these read TK and GKFGLGAK.

It belongs to the TOP6B family. In terms of assembly, homodimer. Heterotetramer of two TOP6A and two TOP6B subunits. Interacts with SPO11-2, but not with SPO11-1, RHL1 or BIN4. In terms of tissue distribution, highly expressed in leaves, stems, flowers and seedlings.

It is found in the nucleus. It catalyses the reaction ATP-dependent breakage, passage and rejoining of double-stranded DNA.. In terms of biological role, component of the DNA topoisomerase VI involved in chromatin organization and progression of endoreduplication cycles. Relaxes both positive and negative superturns and exhibits a strong decatenase activity. The B subunit binds ATP. Involved in cell-elongation processes. The protein is DNA topoisomerase 6 subunit B of Arabidopsis thaliana (Mouse-ear cress).